The sequence spans 67 residues: DNA-directed RNA polymerase subunit omega (67 aa).

It belongs to the RNA polymerase subunit omega family. The RNAP catalytic core consists of 2 alpha, 1 beta, 1 beta' and 1 omega subunit. When a sigma factor is associated with the core the holoenzyme is formed, which can initiate transcription.

It catalyses the reaction RNA(n) + a ribonucleoside 5'-triphosphate = RNA(n+1) + diphosphate. Its function is as follows. Promotes RNA polymerase assembly. Latches the N- and C-terminal regions of the beta' subunit thereby facilitating its interaction with the beta and alpha subunits. In Paracidovorax citrulli (strain AAC00-1) (Acidovorax citrulli), this protein is DNA-directed RNA polymerase subunit omega.